Consider the following 145-residue polypeptide: Maximins 3/H3 type 2 (145 aa).

Positions 1 to 18 (MNFKYIVAVSFLIASAYA) are cleaved as a signal peptide. Propeptides lie at residues 19 to 43 (RSVQ…LREI) and 74 to 124 (RTAE…KEKR). Residue I144 is modified to Isoleucine amide.

The protein belongs to the bombinin family. In terms of tissue distribution, expressed by the skin glands.

It localises to the secreted. Maximin-3 shows antibacterial activity against both Gram-positive and Gram-negative bacteria. It also shows antimicrobial activity against the fungus C.albicans, but not against A.flavus nor P.uticale. It has little hemolytic activity. It possess a significant cytotoxicity against tumor cell lines. It possess a significant anti-HIV activity. It shows high spermicidal activity. Functionally, maximin-H3 shows antibacterial activity against both Gram-positive and Gram-negative bacteria. It also shows antimicrobial activity against the fungus C.albicans. Shows strong hemolytic activity. In Bombina maxima (Giant fire-bellied toad), this protein is Maximins 3/H3 type 2.